The following is a 231-amino-acid chain: Ribonuclease 3 (231 aa).

One can recognise an RNase III domain in the interval 5-134; sequence QKKLKNDYGL…FLGALFIDQG (130 aa). Residue glutamate 47 participates in Mg(2+) binding. The active site involves aspartate 51. Mg(2+)-binding residues include asparagine 120 and glutamate 123. Glutamate 123 is an active-site residue. Residues 160-229 enclose the DRBM domain; that stretch reads DYKTELQEVL…AENAIKGQNH (70 aa).

This sequence belongs to the ribonuclease III family. In terms of assembly, homodimer. Mg(2+) is required as a cofactor.

The protein localises to the cytoplasm. The catalysed reaction is Endonucleolytic cleavage to 5'-phosphomonoester.. Its function is as follows. Digests double-stranded RNA. Involved in the processing of primary rRNA transcript to yield the immediate precursors to the large and small rRNAs (23S and 16S). Processes some mRNAs, and tRNAs when they are encoded in the rRNA operon. Processes pre-crRNA and tracrRNA of type II CRISPR loci if present in the organism. The chain is Ribonuclease 3 from Lactococcus lactis subsp. cremoris (strain MG1363).